We begin with the raw amino-acid sequence, 1907 residues long: Receptor-type tyrosine-protein phosphatase S (1907 aa).

The signal sequence occupies residues 1–29; the sequence is MAPTWRPSVVSVVGPVGLFLVLLARGCLA. Residues 30 to 1257 are Extracellular-facing; sequence EEPPRFIREP…PQPIVDGEEG (1228 aa). Ig-like C2-type domains follow at residues 33-123, 135-224, and 232-314; these read PRFI…AKLT, PNID…ANLY, and PRFS…AQIT. 2 disulfide bridges follow: C54/C107 and C156/C207. The tract at residues 68–72 is important for binding to glycosaminoglycan chains; it reads KKGKK. N-linked (GlcNAc...) asparagine glycosylation is found at N250 and N295. The cysteines at positions 253 and 298 are disulfide-linked. Fibronectin type-III domains follow at residues 321–411, 416–510, 514–603, 608–705, 710–809, 810–906, 907–1008, and 1011–1095; these read APGT…TGEQ, APRN…TQQG, QPMN…TLQA, PPQD…TDED, PPRK…TKGA, VLGR…APRG, FPQI…LARD, and SPKN…TAFN. The span at 691 to 700 shows a compositional bias: low complexity; it reads PGPESSPVVV. Residues 691 to 711 form a disordered region; the sequence is PGPESSPVVVRTDEDVPSAPP. N-linked (GlcNAc...) asparagine glycosylation occurs at N720. N916 carries N-linked (GlcNAc...) asparagine glycosylation. The chain crosses the membrane as a helical span at residues 1258–1278; the sequence is LIWVIGPVLAVVFIICIVIAI. The Cytoplasmic segment spans residues 1279–1907; sequence LLYKNKPDSK…YLGSFDHYAT (629 aa). The span at 1286 to 1296 shows a compositional bias: basic and acidic residues; that stretch reads DSKRKDSEPRT. The disordered stretch occupies residues 1286–1313; sequence DSKRKDSEPRTKCLLNNADLAPHHPKDP. Tyrosine-protein phosphatase domains are found at residues 1352 to 1607 and 1639 to 1898; these read LSQE…LLEA and MELE…ALEY. Substrate-binding positions include D1516, 1548-1554, and Q1592; that span reads CSAGVGR. Catalysis depends on C1548, which acts as the Phosphocysteine intermediate. C1839 (phosphocysteine intermediate) is an active-site residue.

It belongs to the protein-tyrosine phosphatase family. Receptor class 2A subfamily. In terms of assembly, binding to large heparan sulfate proteoglycan structures promotes oligomerization. Binding to chondroitin sulfate proteoglycan does not lead to oligomerization. Interacts (via Ig-like domains) with NTRK1 and NTRK3, but does not form detectable complexes with NTRK2. Interacts with PPFIA1, PPFIA2 and PPFIA3. In terms of processing, a cleavage occurs, separating the extracellular domain from the transmembrane segment. This process called 'ectodomain shedding' is thought to be involved in receptor desensitization, signal transduction and/or membrane localization. Detected in brain neocortex (at protein level). Detected in heart, testis and liver. Detected at lower levels in skeletal muscle, brain, spleen and kidney.

It localises to the cell membrane. The protein localises to the cell projection. Its subcellular location is the axon. It is found in the perikaryon. The protein resides in the cytoplasmic vesicle. It localises to the secretory vesicle. The protein localises to the synaptic vesicle membrane. Its subcellular location is the synapse. It is found in the synaptosome. The protein resides in the postsynaptic density. It localises to the neuron projection. The protein localises to the growth cone. The enzyme catalyses O-phospho-L-tyrosyl-[protein] + H2O = L-tyrosyl-[protein] + phosphate. Cell surface receptor that binds to glycosaminoglycans, including chondroitin sulfate proteoglycans and heparan sulfate proteoglycans. Binding to chondroitin sulfate and heparan sulfate proteoglycans has opposite effects on PTPRS oligomerization and regulation of neurite outgrowth. Contributes to the inhibition of neurite and axonal outgrowth by chondroitin sulfate proteoglycans, also after nerve transection. Plays a role in stimulating neurite outgrowth in response to the heparan sulfate proteoglycan GPC2. Required for normal brain development, especially for normal development of the pituitary gland and the olfactory bulb. Functions as tyrosine phosphatase. Mediates dephosphorylation of NTRK1, NTRK2 and NTRK3. Plays a role in down-regulation of signaling cascades that lead to the activation of Akt and MAP kinases. Down-regulates TLR9-mediated activation of NF-kappa-B, as well as production of TNF, interferon alpha and interferon beta. The polypeptide is Receptor-type tyrosine-protein phosphatase S (Ptprs) (Rattus norvegicus (Rat)).